A 592-amino-acid polypeptide reads, in one-letter code: A-type ATP synthase subunit A (592 aa).

233 to 240 provides a ligand contact to ATP; that stretch reads GPFGSGKT.

It belongs to the ATPase alpha/beta chains family. In terms of assembly, has multiple subunits with at least A(3), B(3), C, D, E, F, H, I and proteolipid K(x).

It localises to the cell membrane. It carries out the reaction ATP + H2O + 4 H(+)(in) = ADP + phosphate + 5 H(+)(out). Functionally, component of the A-type ATP synthase that produces ATP from ADP in the presence of a proton gradient across the membrane. The A chain is the catalytic subunit. The polypeptide is A-type ATP synthase subunit A (Saccharolobus islandicus (strain M.16.27) (Sulfolobus islandicus)).